We begin with the raw amino-acid sequence, 312 residues long: tRNA uridine(34) hydroxylase (312 aa).

A Rhodanese domain is found at 130–225 (RGDEVVFFDG…YGEQFGNKGL (96 aa)). Catalysis depends on cysteine 185, which acts as the Cysteine persulfide intermediate.

The protein belongs to the TrhO family.

It carries out the reaction uridine(34) in tRNA + AH2 + O2 = 5-hydroxyuridine(34) in tRNA + A + H2O. In terms of biological role, catalyzes oxygen-dependent 5-hydroxyuridine (ho5U) modification at position 34 in tRNAs. The polypeptide is tRNA uridine(34) hydroxylase (Corynebacterium glutamicum (strain ATCC 13032 / DSM 20300 / JCM 1318 / BCRC 11384 / CCUG 27702 / LMG 3730 / NBRC 12168 / NCIMB 10025 / NRRL B-2784 / 534)).